The sequence spans 464 residues: MTTRHYDVVVLGTGPAGEGAAMSAAKAGKRVAVIEASSQVGGSCTHLGTIPSKALRHAVKEIIAFNTNPMFRDIGEPRWFSFPKVLDRANRVIDKQVMGRTEYYARNRIDIYFGRGKFKDANTIEVNTYEKGPELLEAKKVVIATGSRPYRPANIDFSHPRIYCSDTILSLSHTPRSLIIYGAGVIGCEYASIFCGLGVRVELINPAKKLLSFLDDEITDALSYHLRDGGVLIRHNETYDSVETTERGVVMHMASGKKLRADALLFCNGRSGNTDNLGLESINLEVNSRGQLAVNDTYQTQVENVYAAGDVIGWPSLASAAYDQGRAAAANMFGAPGGEFISEVPTGIYTIPEISSVGKTEAELTAEKVPYEVGRAFFKNTARAQITGEAVGMLKILFHRESLELLGIHCFGDQASEIVHIGQAIMKQPGKQNTLKYFLNTTFNYPTMAEAYRVAALNGFNRVF.

An FAD-binding site is contributed by 35–44; it reads EASSQVGGSC.

It belongs to the class-I pyridine nucleotide-disulfide oxidoreductase family. It depends on FAD as a cofactor.

It localises to the cytoplasm. It carries out the reaction NAD(+) + NADPH = NADH + NADP(+). In terms of biological role, conversion of NADPH, generated by peripheral catabolic pathways, to NADH, which can enter the respiratory chain for energy generation. This chain is Soluble pyridine nucleotide transhydrogenase, found in Marinomonas sp. (strain MWYL1).